The following is a 1370-amino-acid chain: DNA-directed RNA polymerase subunit beta (1370 aa).

It belongs to the RNA polymerase beta chain family. As to quaternary structure, the RNAP catalytic core consists of 2 alpha, 1 beta, 1 beta' and 1 omega subunit. When a sigma factor is associated with the core the holoenzyme is formed, which can initiate transcription.

It carries out the reaction RNA(n) + a ribonucleoside 5'-triphosphate = RNA(n+1) + diphosphate. Functionally, DNA-dependent RNA polymerase catalyzes the transcription of DNA into RNA using the four ribonucleoside triphosphates as substrates. The protein is DNA-directed RNA polymerase subunit beta of Polaromonas naphthalenivorans (strain CJ2).